The primary structure comprises 206 residues: Large ribosomal subunit protein uL4 (206 aa).

The interval 46–77 (GTRAQKDREQVRHSTKKPFKQKGTGRARAGMT) is disordered. A compositionally biased stretch (basic residues) spans 58–70 (HSTKKPFKQKGTG).

Belongs to the universal ribosomal protein uL4 family. As to quaternary structure, part of the 50S ribosomal subunit.

Its function is as follows. One of the primary rRNA binding proteins, this protein initially binds near the 5'-end of the 23S rRNA. It is important during the early stages of 50S assembly. It makes multiple contacts with different domains of the 23S rRNA in the assembled 50S subunit and ribosome. Forms part of the polypeptide exit tunnel. The chain is Large ribosomal subunit protein uL4 from Polaromonas sp. (strain JS666 / ATCC BAA-500).